Reading from the N-terminus, the 371-residue chain is Probable F-box protein At1g65740 (371 aa).

The F-box domain occupies 2-49; sequence VDWSTLPEELLHFIAARSFSLVEYKRFSSICVSWHSSVSGVKKNPFHR.

The polypeptide is Probable F-box protein At1g65740 (Arabidopsis thaliana (Mouse-ear cress)).